The chain runs to 51 residues: Large ribosomal subunit protein eL39 (51 aa).

It belongs to the eukaryotic ribosomal protein eL39 family.

This chain is Large ribosomal subunit protein eL39, found in Picrophilus torridus (strain ATCC 700027 / DSM 9790 / JCM 10055 / NBRC 100828 / KAW 2/3).